The primary structure comprises 460 residues: Ammonium transporter Rh type B-A (460 aa).

Residues 1 to 10 (MTGYSTNMRI) are Cytoplasmic-facing. A helical transmembrane segment spans residues 11 to 31 (KLPLFCLILQFITIILFAVFV). Topologically, residues 32-62 (RYDHESDARGWHDELKNHSTANADNDFYFRY) are extracellular. The N-linked (GlcNAc...) asparagine glycan is linked to N48. Residues 63–83 (PSFQDVHVMIFIGFGFLMTFL) form a helical membrane-spanning segment. Residues 84–87 (KRYG) lie on the Cytoplasmic side of the membrane. Residues 88 to 108 (FSSVAFNFLIAAFGLQWSTLI) form a helical membrane-spanning segment. At 109–125 (QGFFHGFHDGKIHVGIE) the chain is on the extracellular side. The helical transmembrane segment at 126–146 (SMINADFCTGAVLISFGAVLG) threads the bilayer. At 147–150 (KTSP) the chain is on the cytoplasmic side. A helical transmembrane segment spans residues 151-171 (VQLIVMTLIEVTLFGINEYII). At 172 to 179 (LNIVGAKD) the chain is on the extracellular side. The chain crosses the membrane as a helical span at residues 180–202 (AGGSMTIHTFGAYFGLIVSRVLY). Residues 203–220 (RADLDKSRQREGSVYHSD) are Cytoplasmic-facing. A helical transmembrane segment spans residues 221 to 241 (LFAMIGTIYLWMFWPSFNSAV). At 242-252 (TAHGDDQHRTV) the chain is on the extracellular side. Residues 253–273 (LNTYYSLAACTLATFGFSALL) traverse the membrane as a helical segment. Over 274–283 (NGEGKLDMVH) the chain is Cytoplasmic. The helical transmembrane segment at 284–304 (IQNAALAGGVAVGTSGEMMLT) threads the bilayer. Residue P305 is a topological domain, extracellular. The helical transmembrane segment at 306–326 (FGAMIAGTLAGIVSVLGYKYL) threads the bilayer. Over 327–347 (TPVLDSKLKIQDTCGVHNLHG) the chain is Cytoplasmic. Residues 348–368 (MPGILGAVIGAIVALFATADI) traverse the membrane as a helical segment. Topologically, residues 369 to 394 (YGDGMDDVFPMIFDGSRTAKQQSLYQ) are extracellular. Residues 395 to 415 (FLALLVALGFAIVGGTVVGFI) form a helical membrane-spanning segment. The Cytoplasmic portion of the chain corresponds to 416–460 (LKLPLFGTPSDAECFEDAVYWEVPGGEGHQQLTVVVNNEDPDTQA).

This sequence belongs to the ammonium transporter (TC 2.A.49) family. Rh subfamily.

It is found in the basolateral cell membrane. Its subcellular location is the cytoplasmic vesicle membrane. Its function is as follows. Functions as a specific ammonium transporter. The protein is Ammonium transporter Rh type B-A (rhbg-a) of Xenopus laevis (African clawed frog).